An 807-amino-acid polypeptide reads, in one-letter code: Tyrosine-protein phosphatase non-receptor type 22 (807 aa).

The Tyrosine-protein phosphatase domain occupies 24–289 (FANEFLKLKR…ELVYNAVLEL (266 aa)). Position 35 is a phosphoserine; by PKC/PRKCD (S35). The cysteines at positions 129 and 227 are disulfide-linked. Residue C227 is the Phosphocysteine intermediate of the active site. Substrate contacts are provided by residues 227 to 233 (CSAGCGR) and Q274. A phosphoserine mark is found at S449, S635, S684, and S692. Disordered stretches follow at residues 676-700 (SVKL…LPER) and 724-746 (SYPD…GKSF).

The protein belongs to the protein-tyrosine phosphatase family. Non-receptor class 4 subfamily. As to quaternary structure, interacts with CSK. Interacts with LPXN. Interacts with CBL. Interacts with TRAF3 (via MATH domain); the interaction promotes TRAF3 polyubiquitination. In terms of processing, phosphorylation on Ser-35 by PKC/PRKCD abrogates its ability to dephosphorylate and inactivate the SRC family kinases. In terms of tissue distribution, expressed in bone marrow, B and T-cells, PBMCs, natural killer cells, monocytes, dendritic cells and neutrophils. Both isoform 1 and 4 are predominantly expressed in lymphoid tissues and cells. Isoform 1 is expressed in thymocytes and both mature B and T-cells.

It localises to the cytoplasm. It carries out the reaction O-phospho-L-tyrosyl-[protein] + H2O = L-tyrosyl-[protein] + phosphate. It catalyses the reaction N-(5Z,8Z,11Z,14Z-eicosatetraenoyl)-ethanolamine phosphate + H2O = N-(5Z,8Z,11Z,14Z-eicosatetraenoyl)-ethanolamine + phosphate. Down-regulated by phosphorylation. Functionally, acts as a negative regulator of T-cell receptor (TCR) signaling by direct dephosphorylation of the Src family kinases LCK and FYN, ITAMs of the TCRz/CD3 complex, as well as ZAP70, VAV, VCP and other key signaling molecules. Associates with and probably dephosphorylates CBL. Dephosphorylates LCK at its activating 'Tyr-394' residue. Dephosphorylates ZAP70 at its activating 'Tyr-493' residue. Dephosphorylates the immune system activator SKAP2. Positively regulates toll-like receptor (TLR)-induced type 1 interferon production. Promotes host antiviral responses mediated by type 1 interferon. Regulates NOD2-induced pro-inflammatory cytokine secretion and autophagy. Acts as an activator of NLRP3 inflammasome assembly by mediating dephosphorylation of 'Tyr-861' of NLRP3. Dephosphorylates phospho-anandamide (p-AEA), an endocannabinoid to anandamide (also called N-arachidonoylethanolamide). This chain is Tyrosine-protein phosphatase non-receptor type 22 (PTPN22), found in Homo sapiens (Human).